The following is a 461-amino-acid chain: Serine/threonine-protein kinase ppk24, mitochondrial (461 aa).

The region spanning 120–416 (FQHLKSIAKG…LDSILGTAWV (297 aa)) is the Protein kinase domain. ATP-binding positions include 126-134 (IAKGATSTI) and Lys153. The Proton acceptor role is filled by Asp256.

It belongs to the protein kinase superfamily. Ser/Thr protein kinase family.

It localises to the mitochondrion. It carries out the reaction L-seryl-[protein] + ATP = O-phospho-L-seryl-[protein] + ADP + H(+). The catalysed reaction is L-threonyl-[protein] + ATP = O-phospho-L-threonyl-[protein] + ADP + H(+). Has a role late in meiosis. The polypeptide is Serine/threonine-protein kinase ppk24, mitochondrial (ppk24) (Schizosaccharomyces pombe (strain 972 / ATCC 24843) (Fission yeast)).